Here is a 615-residue protein sequence, read N- to C-terminus: Isocitrate dehydrogenase kinase/phosphatase (615 aa).

ATP is bound by residues Ala-325–Met-331 and Lys-346. Residue Asp-381 is part of the active site.

This sequence belongs to the AceK family.

It is found in the cytoplasm. It carries out the reaction L-seryl-[isocitrate dehydrogenase] + ATP = O-phospho-L-seryl-[isocitrate dehydrogenase] + ADP + H(+). In terms of biological role, bifunctional enzyme which can phosphorylate or dephosphorylate isocitrate dehydrogenase (IDH) on a specific serine residue. This is a regulatory mechanism which enables bacteria to bypass the Krebs cycle via the glyoxylate shunt in response to the source of carbon. When bacteria are grown on glucose, IDH is fully active and unphosphorylated, but when grown on acetate or ethanol, the activity of IDH declines drastically concomitant with its phosphorylation. The sequence is that of Isocitrate dehydrogenase kinase/phosphatase from Albidiferax ferrireducens (strain ATCC BAA-621 / DSM 15236 / T118) (Rhodoferax ferrireducens).